The chain runs to 320 residues: Methionine import ATP-binding protein MetN (320 aa).

The 236-residue stretch at 2 to 237 folds into the ABC transporter domain; it reads IEIKNVSKYF…PSSEMKKLIG (236 aa). 34–41 serves as a coordination point for ATP; it reads GHSGAGKS.

It belongs to the ABC transporter superfamily. Methionine importer (TC 3.A.1.24) family. In terms of assembly, the complex is composed of two ATP-binding proteins (MetN), two transmembrane proteins (MetI) and a solute-binding protein (MetQ).

It is found in the cell membrane. The enzyme catalyses L-methionine(out) + ATP + H2O = L-methionine(in) + ADP + phosphate + H(+). It carries out the reaction D-methionine(out) + ATP + H2O = D-methionine(in) + ADP + phosphate + H(+). Its function is as follows. Part of the ABC transporter complex MetNIQ involved in methionine import. Responsible for energy coupling to the transport system. This chain is Methionine import ATP-binding protein MetN, found in Clostridium acetobutylicum (strain ATCC 824 / DSM 792 / JCM 1419 / IAM 19013 / LMG 5710 / NBRC 13948 / NRRL B-527 / VKM B-1787 / 2291 / W).